Reading from the N-terminus, the 370-residue chain is Metalloproteinase (370 aa).

The signal sequence occupies residues 1–15 (MYLAYIFFLFATVSA). Positions 170-370 (IVIEVLLVTD…DNYGKIFRMF (201 aa)) constitute a Peptidase M12B domain. Asn-226 carries an N-linked (GalNAc...) asparagine glycan. A Zn(2+)-binding site is contributed by His-320. The active site involves Glu-321. Zn(2+)-binding residues include His-324 and His-330.

The protein belongs to the venom metalloproteinase (M12B) family. In terms of tissue distribution, expressed by the venom gland.

The protein localises to the secreted. Metalloprotease that may disrupt the cell matrix and the process of clotting blood or hemolymph. The protein is Metalloproteinase of Tityus obscurus (Amazonian scorpion).